Reading from the N-terminus, the 398-residue chain is 1-deoxy-D-xylulose 5-phosphate reductoisomerase (398 aa).

5 residues coordinate NADPH: Thr11, Gly12, Ser13, Ile14, and Asn125. A 1-deoxy-D-xylulose 5-phosphate-binding site is contributed by Lys126. Position 127 (Glu127) interacts with NADPH. Asp151 is a Mn(2+) binding site. 1-deoxy-D-xylulose 5-phosphate contacts are provided by Ser152, Glu153, Ser186, and His209. Residue Glu153 participates in Mn(2+) binding. Gly215 serves as a coordination point for NADPH. 1-deoxy-D-xylulose 5-phosphate is bound by residues Ser222, Asn227, Lys228, and Glu231. Glu231 is a Mn(2+) binding site.

It belongs to the DXR family. Requires Mg(2+) as cofactor. The cofactor is Mn(2+).

It carries out the reaction 2-C-methyl-D-erythritol 4-phosphate + NADP(+) = 1-deoxy-D-xylulose 5-phosphate + NADPH + H(+). It functions in the pathway isoprenoid biosynthesis; isopentenyl diphosphate biosynthesis via DXP pathway; isopentenyl diphosphate from 1-deoxy-D-xylulose 5-phosphate: step 1/6. Catalyzes the NADPH-dependent rearrangement and reduction of 1-deoxy-D-xylulose-5-phosphate (DXP) to 2-C-methyl-D-erythritol 4-phosphate (MEP). The protein is 1-deoxy-D-xylulose 5-phosphate reductoisomerase of Acinetobacter baumannii (strain ATCC 17978 / DSM 105126 / CIP 53.77 / LMG 1025 / NCDC KC755 / 5377).